The primary structure comprises 466 residues: Glutamate--tRNA ligase (466 aa).

A 'HIGH' region motif is present at residues 11–21; that stretch reads PSPTGFIHLGN. Residues 243-247 carry the 'KMSKS' region motif; that stretch reads KMSKR. Lysine 246 serves as a coordination point for ATP.

It belongs to the class-I aminoacyl-tRNA synthetase family. Glutamate--tRNA ligase type 1 subfamily. Monomer.

It localises to the cytoplasm. It carries out the reaction tRNA(Glu) + L-glutamate + ATP = L-glutamyl-tRNA(Glu) + AMP + diphosphate. Its function is as follows. Catalyzes the attachment of glutamate to tRNA(Glu) in a two-step reaction: glutamate is first activated by ATP to form Glu-AMP and then transferred to the acceptor end of tRNA(Glu). The sequence is that of Glutamate--tRNA ligase from Cupriavidus necator (strain ATCC 17699 / DSM 428 / KCTC 22496 / NCIMB 10442 / H16 / Stanier 337) (Ralstonia eutropha).